A 478-amino-acid chain; its full sequence is Catalase easC (478 aa).

Residue histidine 54 is part of the active site. Residue tyrosine 343 coordinates heme. Residues 459 to 478 (VAEKARPDSPSRAQPGQLRL) are disordered.

This sequence belongs to the catalase family. Heme is required as a cofactor.

The protein operates within alkaloid biosynthesis; ergot alkaloid biosynthesis. Its function is as follows. Catalase; part of the gene cluster that mediates the biosynthesis of fungal ergot alkaloid. DmaW catalyzes the first step of ergot alkaloid biosynthesis by condensing dimethylallyl diphosphate (DMAP) and tryptophan to form 4-dimethylallyl-L-tryptophan. The second step is catalyzed by the methyltransferase easF that methylates 4-dimethylallyl-L-tryptophan in the presence of S-adenosyl-L-methionine, resulting in the formation of 4-dimethylallyl-L-abrine. The catalase easC and the FAD-dependent oxidoreductase easE then transform 4-dimethylallyl-L-abrine to chanoclavine-I which is further oxidized by easD in the presence of NAD(+), resulting in the formation of chanoclavine-I aldehyde. Chanoclavine-I aldehyde is the precursor of ergoamides and ergopeptines in Clavicipitaceae, and clavine-type alcaloids such as fumiclavine in Trichocomaceae. However, the metabolites downstream of chanoclavine-I aldehyde in Arthrodermataceae have not been identified yet. The chain is Catalase easC from Trichophyton verrucosum (strain HKI 0517).